The primary structure comprises 221 residues: Riboflavin kinase (221 aa).

Residues 1 to 92 are H-T-H motif-like; that stretch reads MVTPEDLECL…YRLFGRQEKS (92 aa). The segment at 93 to 221 is riboflavin kinase; that stretch reads LMLNGTVQSG…GDEVTIEVTL (129 aa). 102–107 serves as a coordination point for CDP; it reads GLGEGA. Mg(2+)-binding residues include threonine 131 and asparagine 133. Positions 188 and 196 each coordinate FMN. 201-204 contributes to the CDP binding site; sequence EGLR.

The protein belongs to the archaeal riboflavin kinase family. Mg(2+) is required as a cofactor.

It catalyses the reaction riboflavin + CTP = CDP + FMN + H(+). It functions in the pathway cofactor biosynthesis; FMN biosynthesis; FMN from riboflavin (CTP route): step 1/1. Catalyzes the CTP-dependent phosphorylation of riboflavin (vitamin B2) to form flavin mononucleotide (FMN). The chain is Riboflavin kinase (ribK) from Methanospirillum hungatei JF-1 (strain ATCC 27890 / DSM 864 / NBRC 100397 / JF-1).